The sequence spans 140 residues: MYHGHAKRRFGRTHEHRKAMFANMSQALIKHEQIVTTLPKAKDLRPIVEKLVTLGKRGDLHARRQAIAQIKDVALVGKLFEVLGPRYKDRHGGYLRVLKAGFRYGDNAPMAVIEFVDRDVTAKGKDSGPVLNAAGEEEAA.

This sequence belongs to the bacterial ribosomal protein bL17 family. As to quaternary structure, part of the 50S ribosomal subunit. Contacts protein L32.

The chain is Large ribosomal subunit protein bL17 from Beijerinckia indica subsp. indica (strain ATCC 9039 / DSM 1715 / NCIMB 8712).